The sequence spans 139 residues: AP-4 complex subunit sigma (139 aa).

The protein belongs to the adaptor complexes small subunit family. As to quaternary structure, may be part of the adaptor protein complex 4 (AP-4), a heterotetramer composed of two large adaptins (epsilon-type subunitand beta-type subunit), a medium adaptin (mu-type subunit) and a small adaptin (sigma-type).

Its subcellular location is the golgi apparatus. The protein localises to the trans-Golgi network membrane. Its function is as follows. Probable component of an adaptor protein complex. Adaptor protein complexes are vesicle coat components involved both in vesicle formation and cargo selection. They control the vesicular transport of proteins in different trafficking pathways. The protein is AP-4 complex subunit sigma of Dictyostelium discoideum (Social amoeba).